The sequence spans 122 residues: Protein FLORAL ORGAN NUMBER2 (122 aa).

An N-terminal signal peptide occupies residues 1–25 (MGRLFLCLVVAWCWVALLLVAPVHG). A disordered region spans residues 28–122 (GLPGEFSGDQ…PEHARSTGRP (95 aa)). The span at 54-63 (KQPRGVKGTR) shows a compositional bias: basic residues. The segment covering 64–77 (RPSWSSWSSTASRS) has biased composition (low complexity). Positions 111–122 (RRPEHARSTGRP) are enriched in basic and acidic residues.

Belongs to the CLV3/ESR signal peptide family.

The protein resides in the secreted. Its function is as follows. Probable extracellular signal that regulates meristem maintenance. May function as a putative ligand for a receptor complex including FON1. Regulates the size of the floral meristem and the number of floral organs. The polypeptide is Protein FLORAL ORGAN NUMBER2 (FON2) (Oryza sativa subsp. indica (Rice)).